Here is a 186-residue protein sequence, read N- to C-terminus: Guanylate kinase (186 aa).

The region spanning 4-182 is the Guanylate kinase-like domain; the sequence is GKLIVLTGPS…TLQNLDKILF (179 aa). Position 11–18 (11–18) interacts with ATP; that stretch reads GPSGVGKG.

This sequence belongs to the guanylate kinase family.

It localises to the cytoplasm. The catalysed reaction is GMP + ATP = GDP + ADP. Functionally, essential for recycling GMP and indirectly, cGMP. The protein is Guanylate kinase of Trichodesmium erythraeum (strain IMS101).